Consider the following 119-residue polypeptide: Large ribosomal subunit protein bL19 (119 aa).

It belongs to the bacterial ribosomal protein bL19 family.

Functionally, this protein is located at the 30S-50S ribosomal subunit interface and may play a role in the structure and function of the aminoacyl-tRNA binding site. This chain is Large ribosomal subunit protein bL19, found in Treponema denticola (strain ATCC 35405 / DSM 14222 / CIP 103919 / JCM 8153 / KCTC 15104).